We begin with the raw amino-acid sequence, 499 residues long: Cysteine--tRNA ligase (499 aa).

Position 29 (Cys-29) interacts with Zn(2+). The short motif at Val-31–His-41 is the 'HIGH' region element. Zn(2+) contacts are provided by Cys-213, His-238, and Glu-242. Positions Lys-270–Ser-274 match the 'KMSKS' region motif. ATP is bound at residue Lys-273.

It belongs to the class-I aminoacyl-tRNA synthetase family. Monomer. Zn(2+) is required as a cofactor.

The protein resides in the cytoplasm. The enzyme catalyses tRNA(Cys) + L-cysteine + ATP = L-cysteinyl-tRNA(Cys) + AMP + diphosphate. The polypeptide is Cysteine--tRNA ligase (Synechococcus sp. (strain CC9902)).